We begin with the raw amino-acid sequence, 388 residues long: Chorismate synthase (388 aa).

Positions 39 and 45 each coordinate NADP(+). FMN is bound by residues 130–132, 251–252, G296, 311–315, and R337; these read RSS, NA, and KPIPT.

It belongs to the chorismate synthase family. As to quaternary structure, homotetramer. Requires FMNH2 as cofactor.

It catalyses the reaction 5-O-(1-carboxyvinyl)-3-phosphoshikimate = chorismate + phosphate. Its pathway is metabolic intermediate biosynthesis; chorismate biosynthesis; chorismate from D-erythrose 4-phosphate and phosphoenolpyruvate: step 7/7. Its function is as follows. Catalyzes the anti-1,4-elimination of the C-3 phosphate and the C-6 proR hydrogen from 5-enolpyruvylshikimate-3-phosphate (EPSP) to yield chorismate, which is the branch point compound that serves as the starting substrate for the three terminal pathways of aromatic amino acid biosynthesis. This reaction introduces a second double bond into the aromatic ring system. The sequence is that of Chorismate synthase from Streptococcus pyogenes serotype M49 (strain NZ131).